The sequence spans 389 residues: Succinate--CoA ligase [ADP-forming] subunit beta (389 aa).

The 236-residue stretch at 9–244 folds into the ATP-grasp domain; the sequence is KQLLAEYGIP…KTQEDETEVT (236 aa). ATP contacts are provided by residues lysine 46, 53 to 55, glycine 102, and glutamate 107; that span reads GRG. The Mg(2+) site is built by asparagine 199 and aspartate 213. Residues asparagine 264 and 321 to 323 each bind substrate; that span reads GIV.

It belongs to the succinate/malate CoA ligase beta subunit family. Heterotetramer of two alpha and two beta subunits. The cofactor is Mg(2+).

It catalyses the reaction succinate + ATP + CoA = succinyl-CoA + ADP + phosphate. It carries out the reaction GTP + succinate + CoA = succinyl-CoA + GDP + phosphate. Its pathway is carbohydrate metabolism; tricarboxylic acid cycle; succinate from succinyl-CoA (ligase route): step 1/1. Functionally, succinyl-CoA synthetase functions in the citric acid cycle (TCA), coupling the hydrolysis of succinyl-CoA to the synthesis of either ATP or GTP and thus represents the only step of substrate-level phosphorylation in the TCA. The beta subunit provides nucleotide specificity of the enzyme and binds the substrate succinate, while the binding sites for coenzyme A and phosphate are found in the alpha subunit. This Xanthomonas axonopodis pv. citri (strain 306) protein is Succinate--CoA ligase [ADP-forming] subunit beta.